Reading from the N-terminus, the 157-residue chain is Transcription elongation factor GreA (157 aa).

Belongs to the GreA/GreB family.

In terms of biological role, necessary for efficient RNA polymerase transcription elongation past template-encoded arresting sites. The arresting sites in DNA have the property of trapping a certain fraction of elongating RNA polymerases that pass through, resulting in locked ternary complexes. Cleavage of the nascent transcript by cleavage factors such as GreA or GreB allows the resumption of elongation from the new 3'terminus. GreA releases sequences of 2 to 3 nucleotides. The sequence is that of Transcription elongation factor GreA from Phenylobacterium zucineum (strain HLK1).